We begin with the raw amino-acid sequence, 1940 residues long: Myosin-3 (1940 aa).

Positions 33-82 constitute a Myosin N-terminal SH3-like domain; sequence DAKTYCFVVDSKEEYVKGKIKSSQDGKVTVETEDSRTLVVKPEDVYAMNP. The 694-residue stretch at 86-779 folds into the Myosin motor domain; it reads DKIEDMAMLT…LLGTLEEMRD (694 aa). The residue at position 130 (Lys130) is an N6,N6,N6-trimethyllysine. 179–186 contacts ATP; it reads GESGAGKT. Actin-binding stretches follow at residues 656–678 and 758–772; these read LNKL…IPNE and KFGH…GLLG. The 30-residue stretch at 782-811 folds into the IQ domain; that stretch reads LAKLITRTQAVCRGFLMRVEFQKMMQRRES. Positions 841-1928 form a coiled coil; it reads LKSAETEKEM…NKLRAKTRDF (1088 aa). The segment at 1260–1289 is disordered; it reads ARGKNEEMQRSLSELTTQKSRLQTEAGELS. Polar residues predominate over residues 1269-1282; sequence RSLSELTTQKSRLQ.

The protein belongs to the TRAFAC class myosin-kinesin ATPase superfamily. Myosin family. Muscle myosin is a hexameric protein that consists of 2 heavy chain subunits (MHC), 2 alkali light chain subunits (MLC) and 2 regulatory light chain subunits (MLC-2).

The protein localises to the cytoplasm. It is found in the myofibril. Functionally, muscle contraction. This is Myosin-3 (Myh3) from Mus musculus (Mouse).